The primary structure comprises 381 residues: Pyrimidine monooxygenase RutA (381 aa).

FMN contacts are provided by residues 66-67 (IK), asparagine 132, glutamate 141, 157-158 (RY), and serine 207.

Belongs to the NtaA/SnaA/DszA monooxygenase family. RutA subfamily.

The catalysed reaction is uracil + FMNH2 + NADH + O2 = (Z)-3-ureidoacrylate + FMN + NAD(+) + H2O + H(+). The enzyme catalyses thymine + FMNH2 + NADH + O2 = (Z)-2-methylureidoacrylate + FMN + NAD(+) + H2O + H(+). Catalyzes the pyrimidine ring opening between N-3 and C-4 by an unusual flavin hydroperoxide-catalyzed mechanism, adding oxygen atoms in the process to yield ureidoacrylate peracid, that immediately reacts with FMN forming ureidoacrylate and FMN-N(5)-oxide. The FMN-N(5)-oxide reacts spontaneously with NADH to produce FMN. Requires the flavin reductase RutF to regenerate FMN in vivo. The sequence is that of Pyrimidine monooxygenase RutA from Methylobacterium radiotolerans (strain ATCC 27329 / DSM 1819 / JCM 2831 / NBRC 15690 / NCIMB 10815 / 0-1).